The following is a 435-amino-acid chain: Xylose isomerase (435 aa).

Active-site residues include H100 and D103. Residues E231, E267, H270, D295, D306, D308, and D338 each contribute to the Mg(2+) site.

It belongs to the xylose isomerase family. Homotetramer. Mg(2+) is required as a cofactor.

Its subcellular location is the cytoplasm. The catalysed reaction is alpha-D-xylose = alpha-D-xylulofuranose. The protein is Xylose isomerase of Brucella suis (strain ATCC 23445 / NCTC 10510).